Here is a 485-residue protein sequence, read N- to C-terminus: NADH-quinone oxidoreductase subunit N (485 aa).

14 consecutive transmembrane segments (helical) span residues 8–28 (LIAL…MLCI), 35–55 (FVNA…LYFV), 75–95 (FYTG…YPWL), 105–125 (FYLL…ANHL), 127–147 (SLFI…GYAF), 159–179 (YMLL…LIYA), 203–223 (LLAG…LVPF), 235–255 (PAPV…GAVM), 271–291 (IVLS…AVSQ), 297–317 (LLGY…IAVQ), 326–346 (VGVY…VVSL), 374–394 (AVMT…GFFG), 407–426 (LWWL…YYYL), and 449–469 (ALTA…FFGL).

This sequence belongs to the complex I subunit 2 family. NDH-1 is composed of 13 different subunits. Subunits NuoA, H, J, K, L, M, N constitute the membrane sector of the complex.

It is found in the cell inner membrane. It carries out the reaction a quinone + NADH + 5 H(+)(in) = a quinol + NAD(+) + 4 H(+)(out). NDH-1 shuttles electrons from NADH, via FMN and iron-sulfur (Fe-S) centers, to quinones in the respiratory chain. The immediate electron acceptor for the enzyme in this species is believed to be ubiquinone. Couples the redox reaction to proton translocation (for every two electrons transferred, four hydrogen ions are translocated across the cytoplasmic membrane), and thus conserves the redox energy in a proton gradient. The protein is NADH-quinone oxidoreductase subunit N of Pectobacterium atrosepticum (strain SCRI 1043 / ATCC BAA-672) (Erwinia carotovora subsp. atroseptica).